Reading from the N-terminus, the 375-residue chain is 23S rRNA (uracil(747)-C(5))-methyltransferase RlmC (375 aa).

[4Fe-4S] cluster contacts are provided by Cys-3, Cys-11, Cys-14, and Cys-87. S-adenosyl-L-methionine is bound by residues Gln-212, Phe-241, Glu-262, and Asn-307. The Nucleophile role is filled by Cys-334.

It belongs to the class I-like SAM-binding methyltransferase superfamily. RNA M5U methyltransferase family. RlmC subfamily.

The catalysed reaction is uridine(747) in 23S rRNA + S-adenosyl-L-methionine = 5-methyluridine(747) in 23S rRNA + S-adenosyl-L-homocysteine + H(+). In terms of biological role, catalyzes the formation of 5-methyl-uridine at position 747 (m5U747) in 23S rRNA. The sequence is that of 23S rRNA (uracil(747)-C(5))-methyltransferase RlmC from Salmonella paratyphi A (strain ATCC 9150 / SARB42).